Here is a 263-residue protein sequence, read N- to C-terminus: HTH-type transcriptional repressor NanR (263 aa).

One can recognise an HTH gntR-type domain in the interval 30–98 (KKLSEMVEEE…NGERARVSRP (69 aa)). The H-T-H motif DNA-binding region spans 58 to 77 (ERELMAFFNVGRPSVREALA).

It belongs to the NanR family.

Transcriptional repressor that controls expression of the genes required for the catabolism of sialic acids. The chain is HTH-type transcriptional repressor NanR from Salmonella bongori (strain ATCC 43975 / DSM 13772 / NCTC 12419).